We begin with the raw amino-acid sequence, 658 residues long: Threonine--tRNA ligase (658 aa).

A TGS domain is found at Met1–Thr64. A catalytic region spans residues Asp246–Pro549. Positions 343, 394, and 526 each coordinate Zn(2+).

Belongs to the class-II aminoacyl-tRNA synthetase family. Homodimer. Requires Zn(2+) as cofactor.

The protein resides in the cytoplasm. The enzyme catalyses tRNA(Thr) + L-threonine + ATP = L-threonyl-tRNA(Thr) + AMP + diphosphate + H(+). Catalyzes the attachment of threonine to tRNA(Thr) in a two-step reaction: L-threonine is first activated by ATP to form Thr-AMP and then transferred to the acceptor end of tRNA(Thr). Also edits incorrectly charged L-seryl-tRNA(Thr). The chain is Threonine--tRNA ligase from Bartonella quintana (strain Toulouse) (Rochalimaea quintana).